A 513-amino-acid chain; its full sequence is MQLNAHEISDLIKKQIEGFDFTAEARTEGSVVSVSDGIVRIHGLGDVQFGEMIEFSNNTFGMALNLEQDSVGAVILGDYLHILEGDIVKCTNRLVEVPVGEAMLGRVVNPLGKAIDGKGDIDAQGVRPLEVMAPGVIDRKSVDQPIQTGIKAIDAMVPVGRGQRELIIGDRQTGKTAVAIDAIINQRDSGIRCVYVAIGQKDSSVATVVRKLEEYGALANTIIVVAGAAVSPALQYIAPYAGCAMAEYFRDRGEDVLIVYDDLTKQAWAYREVSLLLKRPPGREAYPGDVFYLHSRLLERASRVNADYVEKMTNGKVKGQTGSLTALPIIETQGGDVSAFVPTNVISITDGQIFLETDLFNAGIRPAINVGLSVSRVGGAAQTNIIKKLGGGIRLDLAQYRELVAFAQFSSDLDVETKAQIDRGQRVTELMKQNQYSPLSIAEMATLLFSANSGLLDDIEVNKIVDFEVSLIAYMKVNQVSLMNRINEIGNYNDKISNELQVAIDDFKTNYTW.

169-176 (GDRQTGKT) lines the ATP pocket.

This sequence belongs to the ATPase alpha/beta chains family. F-type ATPases have 2 components, CF(1) - the catalytic core - and CF(0) - the membrane proton channel. CF(1) has five subunits: alpha(3), beta(3), gamma(1), delta(1), epsilon(1). CF(0) has three main subunits: a(1), b(2) and c(9-12). The alpha and beta chains form an alternating ring which encloses part of the gamma chain. CF(1) is attached to CF(0) by a central stalk formed by the gamma and epsilon chains, while a peripheral stalk is formed by the delta and b chains.

Its subcellular location is the cell inner membrane. It catalyses the reaction ATP + H2O + 4 H(+)(in) = ADP + phosphate + 5 H(+)(out). Its function is as follows. Produces ATP from ADP in the presence of a proton gradient across the membrane. The alpha chain is a regulatory subunit. This Vesicomyosocius okutanii subsp. Calyptogena okutanii (strain HA) protein is ATP synthase subunit alpha.